A 689-amino-acid chain; its full sequence is MQAQGSQSNVGSLRSNCSDNSLPNNHVMMHCDESSGSPHSEHNDYSYEKTNLESTASNSREHRDNQLSRLKSEEYVVPKNQRRGLLPQLAIIPEFKDARDYPPMMKKMIVFLIAFSSMMGPMGTSIIFPAINSITTEFKTSVIMVNVSIGVYLLSLGVFPLWWSSLSELEGRRTTYITSFALLFAFNIGSALAPDINSFIALRMLCGAASASVQSVGAGTVADLYISEDRGKNLSYYYLGPLLAPLLSPIFGSLLVNRWPWRSTQWFMVILSGCNVILLTVLLPETLRKQDSKGAIAQILAERRIQVDNNERGEIQEDYQRGEDETDRIENQVATLSTEKHNYVGEVRDQDSLDLESHSSPNTYDGRAGETQLQRIYTEASRSLYEYQLDDSGIDATTAQVTRIRSTDPKLARSIRENSLRKLQTNLEEQVKKVLSSNGGEIAPKQVSAVRKVWDTFFVYFIKPLKSLHFLEYPPVALAITFSAISFSTVYFVNMTVEYKYSRPPYNFKPLYIGLLYIPNSVTYFFASIYGGRWVDMLLKRYKEKYGILAPEARISWNVVTSVISFPIALLIFGWCLDKKCHWVTPLIGTALFGYAAMMTIGATLSYLVDSLPGKGATGVALNNLIRQILAATAVFVTTPMLNGMGTGWAFTMLAFIVLGASSVLIILKKHGDYWRENYDLQKLYDKID.

The segment covering 1-24 (MQAQGSQSNVGSLRSNCSDNSLPN) has biased composition (polar residues). The segment at 1-73 (MQAQGSQSNV…DNQLSRLKSE (73 aa)) is disordered. The Extracellular segment spans residues 1–108 (MQAQGSQSNV…RDYPPMMKKM (108 aa)). Composition is skewed to basic and acidic residues over residues 29 to 51 (MHCD…EKTN) and 59 to 73 (SREH…LKSE). Residues 109 to 131 (IVFLIAFSSMMGPMGTSIIFPAI) form a helical membrane-spanning segment. Over 132–139 (NSITTEFK) the chain is Cytoplasmic. Residues 140–163 (TSVIMVNVSIGVYLLSLGVFPLWW) traverse the membrane as a helical segment. Over 164–175 (SSLSELEGRRTT) the chain is Extracellular. A helical transmembrane segment spans residues 176 to 193 (YITSFALLFAFNIGSALA). Topologically, residues 194 to 235 (PDINSFIALRMLCGAASASVQSVGAGTVADLYISEDRGKNLS) are cytoplasmic. Residues 236-256 (YYYLGPLLAPLLSPIFGSLLV) form a helical membrane-spanning segment. The Extracellular portion of the chain corresponds to 257–265 (NRWPWRSTQ). Residues 266 to 283 (WFMVILSGCNVILLTVLL) form a helical membrane-spanning segment. The Cytoplasmic segment spans residues 284 to 475 (PETLRKQDSK…KSLHFLEYPP (192 aa)). A Phosphoserine modification is found at Ser-436. Residues 476–493 (VALAITFSAISFSTVYFV) form a helical membrane-spanning segment. At 494 to 510 (NMTVEYKYSRPPYNFKP) the chain is on the extracellular side. The helical transmembrane segment at 511 to 532 (LYIGLLYIPNSVTYFFASIYGG) threads the bilayer. The Cytoplasmic segment spans residues 533–558 (RWVDMLLKRYKEKYGILAPEARISWN). The chain crosses the membrane as a helical span at residues 559–577 (VVTSVISFPIALLIFGWCL). At 578–586 (DKKCHWVTP) the chain is on the extracellular side. The helical transmembrane segment at 587 to 609 (LIGTALFGYAAMMTIGATLSYLV) threads the bilayer. The Cytoplasmic portion of the chain corresponds to 610–624 (DSLPGKGATGVALNN). A helical membrane pass occupies residues 625–642 (LIRQILAATAVFVTTPML). Residues 643 to 648 (NGMGTG) lie on the Extracellular side of the membrane. Residues 649 to 668 (WAFTMLAFIVLGASSVLIIL) traverse the membrane as a helical segment. Residues 669 to 689 (KKHGDYWRENYDLQKLYDKID) lie on the Cytoplasmic side of the membrane.

Belongs to the major facilitator superfamily. CAR1 family.

It localises to the cell membrane. Its function is as follows. Multidrug resistance transporter involved in resistance and adaptation to quinidine and to the herbicide barban (4-chloro-2-butynyl [3-chlorophenyl] carbamate). The chain is Quinidine resistance protein 3 (QDR3) from Saccharomyces cerevisiae (strain ATCC 204508 / S288c) (Baker's yeast).